A 627-amino-acid polypeptide reads, in one-letter code: Alpha-terpineol synthase, chloroplastic (627 aa).

A chloroplast-targeting transit peptide spans 1 to 53 (MAGITGVMNMKLAARPSSGRHSRGCRPAVVPSAGKQMLLVRRHPPGSASWPTR). The disordered stretch occupies residues 13-90 (AARPSSGRHS…EDRASRNTSS (78 aa)). (2E)-geranyl diphosphate-binding residues include Arg339, Asp376, Asp380, Arg518, and Asp521. Residues Asp376 and Asp380 each contribute to the Mg(2+) site. The DDXXD motif motif lies at 376-380 (DDTYD). Residues Asp521, Ser525, and Glu529 each contribute to the Mg(2+) site.

It belongs to the terpene synthase family. Tpsb subfamily. As to quaternary structure, monomer. Mg(2+) serves as cofactor. It depends on Mn(2+) as a cofactor. Expressed in seedling leaf sheaths and roots.

Its subcellular location is the plastid. It is found in the chloroplast. The catalysed reaction is (2E)-geranyl diphosphate + H2O = (S)-alpha-terpineol + diphosphate. It carries out the reaction (2E)-geranyl diphosphate = (4S)-limonene + diphosphate. It catalyses the reaction (2E)-geranyl diphosphate = gamma-terpinene + diphosphate. The enzyme catalyses (2E)-geranyl diphosphate = beta-myrcene + diphosphate. The catalysed reaction is (2E)-geranyl diphosphate = terpinolene + diphosphate. It carries out the reaction (2E)-geranyl diphosphate + H2O = 4-terpineol + diphosphate. It functions in the pathway secondary metabolite biosynthesis; terpenoid biosynthesis. In terms of biological role, component of the volatile terpenes biosynthesis pathways. Mediates the synthesis of a blend of monoterpenes. Converts mainly geranyl diphosphate to alpha-terpineol. Also triggers the biosynthesis of minor monoterpenes including limonene, gamma-terpinene, beta-myrcene, terpinolene and 4-terpineol. The polypeptide is Alpha-terpineol synthase, chloroplastic (Zea mays (Maize)).